A 380-amino-acid chain; its full sequence is Cytochrome b (380 aa).

4 helical membrane passes run 34–54 (FGSLLGICLMTQILTGLLLAM), 78–99 (WLIRNLHANGASLFFICIYLHI), 114–134 (WNTGIILLLTLMATAFVGYVL), and 179–199 (FFALHFLLPFLIAGLTLIHLT). The heme b site is built by H84 and H98. The heme b site is built by H183 and H197. Position 202 (H202) interacts with a ubiquinone. 4 helical membrane-spanning segments follow: residues 227-247 (SKDILGFMLLYFLLTTLALLS), 289-309 (LGGVLALAASILILFLSPFLH), 321-341 (LSQALFWLLVTNLFILTWIGS), and 348-368 (FIIIGQLASLSYFTILLILLP).

It belongs to the cytochrome b family. As to quaternary structure, the cytochrome bc1 complex contains 11 subunits: 3 respiratory subunits (MT-CYB, CYC1 and UQCRFS1), 2 core proteins (UQCRC1 and UQCRC2) and 6 low-molecular weight proteins (UQCRH/QCR6, UQCRB/QCR7, UQCRQ/QCR8, UQCR10/QCR9, UQCR11/QCR10 and a cleavage product of UQCRFS1). This cytochrome bc1 complex then forms a dimer. The cofactor is heme b.

It is found in the mitochondrion inner membrane. Functionally, component of the ubiquinol-cytochrome c reductase complex (complex III or cytochrome b-c1 complex) that is part of the mitochondrial respiratory chain. The b-c1 complex mediates electron transfer from ubiquinol to cytochrome c. Contributes to the generation of a proton gradient across the mitochondrial membrane that is then used for ATP synthesis. This Phalcoboenus australis (Striated caracara) protein is Cytochrome b (MT-CYB).